We begin with the raw amino-acid sequence, 387 residues long: Succinate--CoA ligase [ADP-forming] subunit beta (387 aa).

The ATP-grasp domain occupies 9–236 (RDLFEKYGVP…KAAADPLEAK (228 aa)). ATP-binding positions include Lys-45, 52–54 (GRG), Ala-94, and Glu-99. Positions 191 and 205 each coordinate Mg(2+). Residues Asn-256 and 318 to 320 (GIT) contribute to the substrate site.

The protein belongs to the succinate/malate CoA ligase beta subunit family. In terms of assembly, heterotetramer of two alpha and two beta subunits. It depends on Mg(2+) as a cofactor.

It carries out the reaction succinate + ATP + CoA = succinyl-CoA + ADP + phosphate. The enzyme catalyses GTP + succinate + CoA = succinyl-CoA + GDP + phosphate. The protein operates within carbohydrate metabolism; tricarboxylic acid cycle; succinate from succinyl-CoA (ligase route): step 1/1. Its function is as follows. Succinyl-CoA synthetase functions in the citric acid cycle (TCA), coupling the hydrolysis of succinyl-CoA to the synthesis of either ATP or GTP and thus represents the only step of substrate-level phosphorylation in the TCA. The beta subunit provides nucleotide specificity of the enzyme and binds the substrate succinate, while the binding sites for coenzyme A and phosphate are found in the alpha subunit. The sequence is that of Succinate--CoA ligase [ADP-forming] subunit beta from Leifsonia xyli subsp. xyli (strain CTCB07).